A 142-amino-acid chain; its full sequence is Nucleoside diphosphate kinase (142 aa).

The ATP site is built by Lys11, Phe59, Arg87, Thr93, Arg104, and Asn114. The Pros-phosphohistidine intermediate role is filled by His117.

Belongs to the NDK family. Homotetramer. Mg(2+) serves as cofactor.

It localises to the cytoplasm. The catalysed reaction is a 2'-deoxyribonucleoside 5'-diphosphate + ATP = a 2'-deoxyribonucleoside 5'-triphosphate + ADP. It carries out the reaction a ribonucleoside 5'-diphosphate + ATP = a ribonucleoside 5'-triphosphate + ADP. Major role in the synthesis of nucleoside triphosphates other than ATP. The ATP gamma phosphate is transferred to the NDP beta phosphate via a ping-pong mechanism, using a phosphorylated active-site intermediate. This is Nucleoside diphosphate kinase from Yersinia pseudotuberculosis serotype O:1b (strain IP 31758).